Consider the following 510-residue polypeptide: Probable lysine--tRNA ligase, cytoplasmic (510 aa).

It belongs to the class-II aminoacyl-tRNA synthetase family. Homodimer.

It is found in the cytoplasm. It catalyses the reaction tRNA(Lys) + L-lysine + ATP = L-lysyl-tRNA(Lys) + AMP + diphosphate. In Encephalitozoon cuniculi (strain GB-M1) (Microsporidian parasite), this protein is Probable lysine--tRNA ligase, cytoplasmic.